A 255-amino-acid polypeptide reads, in one-letter code: Glutamate racemase (255 aa).

Substrate is bound by residues aspartate 7–serine 8 and tyrosine 39–glycine 40. The Proton donor/acceptor role is filled by cysteine 70. Asparagine 71 to threonine 72 serves as a coordination point for substrate. Cysteine 181 (proton donor/acceptor) is an active-site residue. Threonine 182–histidine 183 provides a ligand contact to substrate.

It belongs to the aspartate/glutamate racemases family. In terms of assembly, homodimer.

The enzyme catalyses L-glutamate = D-glutamate. It functions in the pathway cell wall biogenesis; peptidoglycan biosynthesis. In terms of biological role, provides the (R)-glutamate required for cell wall biosynthesis. This is Glutamate racemase from Helicobacter pylori (strain J99 / ATCC 700824) (Campylobacter pylori J99).